The sequence spans 331 residues: MKVYYEKDANLEALKGKTVAIIGYGSQGHAHAQNLRDSGISVIVGQRPGGANYALAKEHGFEPVSAAEAAAKADLIMILLPDQVQAAVYEAEIKPNLKAGDALLFAHGFNIHFGQIEPPKDVDVFMIAPKGPGHLVRRTYTEGGGVPCLVAVHQDATGKAMEKALAYAKGVGGSRSGVIETTFREETETDLFGEQAVLCGGLSSLIKAGFETLVEAGYQPEIAYFECLHEVKLIVDLIYEGGLERMRYSISDTAEYGDYVTGKRIVTEETKKEMKKVLRDIQDGTFARNFILEAKAGYPGFKATRRLEAEHQIEKVGGELRGMMPWLKKKV.

One can recognise a KARI N-terminal Rossmann domain in the interval M1 to T181. NADP(+) is bound by residues Y24–Q27, R47, and D82–Q85. H107 is an active-site residue. Position 133 (G133) interacts with NADP(+). In terms of domain architecture, KARI C-terminal knotted spans T182–L327. Mg(2+) is bound by residues D190, E194, E226, and E230. S251 serves as a coordination point for substrate.

Belongs to the ketol-acid reductoisomerase family. Requires Mg(2+) as cofactor.

It carries out the reaction (2R)-2,3-dihydroxy-3-methylbutanoate + NADP(+) = (2S)-2-acetolactate + NADPH + H(+). The enzyme catalyses (2R,3R)-2,3-dihydroxy-3-methylpentanoate + NADP(+) = (S)-2-ethyl-2-hydroxy-3-oxobutanoate + NADPH + H(+). Its pathway is amino-acid biosynthesis; L-isoleucine biosynthesis; L-isoleucine from 2-oxobutanoate: step 2/4. It participates in amino-acid biosynthesis; L-valine biosynthesis; L-valine from pyruvate: step 2/4. Its function is as follows. Involved in the biosynthesis of branched-chain amino acids (BCAA). Catalyzes an alkyl-migration followed by a ketol-acid reduction of (S)-2-acetolactate (S2AL) to yield (R)-2,3-dihydroxy-isovalerate. In the isomerase reaction, S2AL is rearranged via a Mg-dependent methyl migration to produce 3-hydroxy-3-methyl-2-ketobutyrate (HMKB). In the reductase reaction, this 2-ketoacid undergoes a metal-dependent reduction by NADPH to yield (R)-2,3-dihydroxy-isovalerate. In Nitratidesulfovibrio vulgaris (strain ATCC 29579 / DSM 644 / CCUG 34227 / NCIMB 8303 / VKM B-1760 / Hildenborough) (Desulfovibrio vulgaris), this protein is Ketol-acid reductoisomerase (NADP(+)).